We begin with the raw amino-acid sequence, 305 residues long: tRNA pseudouridine synthase B (305 aa).

Asp39 acts as the Nucleophile in catalysis.

This sequence belongs to the pseudouridine synthase TruB family. Type 1 subfamily.

It carries out the reaction uridine(55) in tRNA = pseudouridine(55) in tRNA. Responsible for synthesis of pseudouridine from uracil-55 in the psi GC loop of transfer RNAs. The polypeptide is tRNA pseudouridine synthase B (Staphylococcus aureus (strain Newman)).